The chain runs to 89 residues: Small ribosomal subunit protein uS15 (89 aa).

It belongs to the universal ribosomal protein uS15 family. As to quaternary structure, part of the 30S ribosomal subunit. Forms a bridge to the 50S subunit in the 70S ribosome, contacting the 23S rRNA.

One of the primary rRNA binding proteins, it binds directly to 16S rRNA where it helps nucleate assembly of the platform of the 30S subunit by binding and bridging several RNA helices of the 16S rRNA. Functionally, forms an intersubunit bridge (bridge B4) with the 23S rRNA of the 50S subunit in the ribosome. In Prosthecochloris aestuarii (strain DSM 271 / SK 413), this protein is Small ribosomal subunit protein uS15.